The following is a 456-amino-acid chain: tRNA modification GTPase MnmE (456 aa).

3 residues coordinate (6S)-5-formyl-5,6,7,8-tetrahydrofolate: Arg-24, Glu-81, and Lys-120. Residues 216–379 (GMTVVIAGRP…LRDHLKGCMG (164 aa)) enclose the TrmE-type G domain. A K(+)-binding site is contributed by Asn-226. Residues 226–231 (NAGKSS), 245–251 (TDIAGTT), 270–273 (DTAG), and 335–338 (NKAD) each bind GTP. Ser-230 contributes to the Mg(2+) binding site. The K(+) site is built by Thr-245, Ile-247, and Thr-250. Position 251 (Thr-251) interacts with Mg(2+). Lys-456 serves as a coordination point for (6S)-5-formyl-5,6,7,8-tetrahydrofolate.

The protein belongs to the TRAFAC class TrmE-Era-EngA-EngB-Septin-like GTPase superfamily. TrmE GTPase family. Homodimer. Heterotetramer of two MnmE and two MnmG subunits. The cofactor is K(+).

The protein localises to the cytoplasm. In terms of biological role, exhibits a very high intrinsic GTPase hydrolysis rate. Involved in the addition of a carboxymethylaminomethyl (cmnm) group at the wobble position (U34) of certain tRNAs, forming tRNA-cmnm(5)s(2)U34. This is tRNA modification GTPase MnmE from Pseudomonas putida (strain ATCC 47054 / DSM 6125 / CFBP 8728 / NCIMB 11950 / KT2440).